We begin with the raw amino-acid sequence, 347 residues long: Subtilase cytotoxin subunit A (347 aa).

Residues 1–21 form the signal peptide; the sequence is MLKILWTYILFLLFISASARA. The Peptidase S8 domain maps to 24 to 327; it reads PWYFDAIGLT…GRVLNAEKAI (304 aa). Active-site charge relay system residues include D52, H89, and S272. Residues C288 and C331 are joined by a disulfide bond. The A2 domain stretch occupies residues 322 to 347; sequence NAEKAISMFCKKNYIPVRQGRMSEEL. Positions 344 to 347 match the Prevents secretion from ER motif; sequence SEEL.

Belongs to the peptidase S8 family. As to quaternary structure, forms a complex with SubB with the stoichiometry SubA1:SubB5 (called SubAB5).

It is found in the secreted. The protein resides in the host cytoplasm. Its subcellular location is the host cytosol. The protein localises to the host endoplasmic reticulum lumen. Protease subunit of subtilase cytotoxin SubAB5. An endoprotease specific for host endoplasmic reticulum (ER) chaperone BiP/HSPA5, has no activity on human HSP70 or HSPA8. Cleaves between 'Leu-416' and 'Leu-417' of BiP/HSPA5 in the hinge between BiP's ATPase and protein-binding domains. This induces host ER stress response and eventual cell death. Culture supernatant of E.coli expressing both subA and subB are toxic for Vero cells (African green monkey kidney cell line), Chinese hamster ovary cells and Hct-8 cells (human colonic epithelial cell line); the subunits are not toxic individually. Purified SubAB5 is highly toxic, &lt;0.1 pg is able to kill at least 50% of 30'000 Vero cells in a microtiter plate assay after 3 days; no cytotoxicity is seen at 24 hours. Preabsorption with cells expressing a ganglioside GM2 mimic reduced cytotoxicity of SubAB5 by 93% in the Vero cytotoxicity assay. Intraperitoneal injection of 200 ng of purified SubAB5 kills mice; the higher the dose the faster the mice die. Animals injected intraperitoneally with purified SubAB5 have microvascular thrombi in the brain and other organs, including the renal tubules and glomeruli. Injection induces an unfolded response in mice. Mice fed E.coli cells expressing cloned SubAB5 experience drastic weight loss and appear ill and lethargic. Protein synthesis in Vero cells is transiently inhibited by SubAB5; both subunits are required for this effect. Inhibition of protein synthesis is prevented by brefeldin A; cells are arrested in the G1 phase. SubAB5 at 100 ng/ml induced caspase-dependent apoptosis in Vero cells through mitochondrial membrane damage. The sequence is that of Subtilase cytotoxin subunit A from Escherichia coli.